The primary structure comprises 329 residues: Putative HTH-type transcriptional regulatory protein APE_0778 (329 aa).

The HTH cro/C1-type domain maps to 142 to 200 (LREKRLEKGLSLGHLAYMLKTSRKSIYEYERGVMSPSVEKAEKLVDILGEEILEPIDIL). The segment at residues 153–172 (LGHLAYMLKTSRKSIYEYER) is a DNA-binding region (H-T-H motif).

The polypeptide is Putative HTH-type transcriptional regulatory protein APE_0778 (Aeropyrum pernix (strain ATCC 700893 / DSM 11879 / JCM 9820 / NBRC 100138 / K1)).